We begin with the raw amino-acid sequence, 354 residues long: Dihydroorotate dehydrogenase (quinone) (354 aa).

Residues 67-71 and Thr91 contribute to the FMN site; that span reads AGFDK. Lys71 is a binding site for substrate. Residue 116–120 participates in substrate binding; that stretch reads NRMGF. FMN-binding residues include Asn144 and Asn177. Asn177 lines the substrate pocket. The Nucleophile role is filled by Ser180. Asn182 contacts substrate. FMN-binding residues include Lys213 and Thr241. A substrate-binding site is contributed by 242-243; it reads NT. FMN is bound by residues Gly265, Gly294, and 315–316; that span reads YT.

Belongs to the dihydroorotate dehydrogenase family. Type 2 subfamily. As to quaternary structure, monomer. FMN serves as cofactor.

Its subcellular location is the cell membrane. It catalyses the reaction (S)-dihydroorotate + a quinone = orotate + a quinol. It functions in the pathway pyrimidine metabolism; UMP biosynthesis via de novo pathway; orotate from (S)-dihydroorotate (quinone route): step 1/1. Functionally, catalyzes the conversion of dihydroorotate to orotate with quinone as electron acceptor. The protein is Dihydroorotate dehydrogenase (quinone) of Mycolicibacterium smegmatis (strain ATCC 700084 / mc(2)155) (Mycobacterium smegmatis).